Here is a 504-residue protein sequence, read N- to C-terminus: Signal transduction histidine-protein kinase/phosphatase MprB (504 aa).

At 1 to 26 the chain is on the cytoplasmic side; sequence MWWFRRRDRAPLRATSSLSLRWRVML. The helical transmembrane segment at 27-47 threads the bilayer; that stretch reads LAMSMVAMVVVLMSFAVYAVI. Residues 48-163 are Extracellular-facing; that stretch reads SAALYSDIDN…PTEAVMNKLR (116 aa). A helical membrane pass occupies residues 164 to 184; the sequence is WVLLIVGGIGVAVAAVAGGMV. At 185–504 the chain is on the cytoplasmic side; that stretch reads TRAGLRPVGR…SVESQSTRAT (320 aa). The 53-residue stretch at 186–238 folds into the HAMP domain; that stretch reads RAGLRPVGRLTEAAERVARTDDLRPIPVFGSDELARLTEAFNLMLRALAESRE. The region spanning 246-466 is the Histidine kinase domain; it reads DAGHELRTPL…SIYVLLPGRR (221 aa). H249 is modified (phosphohistidine; by autocatalysis). Residues 471–504 form a disordered region; it reads QLPGATAGARSTDIENSRGSANVISVESQSTRAT. The segment covering 487 to 504 has biased composition (polar residues); it reads SRGSANVISVESQSTRAT.

Requires Mg(2+) as cofactor. Mn(2+) is required as a cofactor. Post-translationally, autophosphorylated.

It localises to the cell membrane. The catalysed reaction is ATP + protein L-histidine = ADP + protein N-phospho-L-histidine.. Its function is as follows. Member of the two-component regulatory system MprB/MprA which contributes to maintaining a balance among several systems involved in stress resistance and is required for establishment and maintenance of persistent infection in the host. In response to environmental signals MprB acts both as a membrane-associated protein kinase that undergoes autophosphorylation and subsequently transfers the phosphate to MprA, and a protein phosphatase that dephosphorylates phospho-MprA. MprB/MprA up-regulates expression of mprA and pepD. In Mycobacterium bovis (strain ATCC BAA-935 / AF2122/97), this protein is Signal transduction histidine-protein kinase/phosphatase MprB (mprB).